A 309-amino-acid chain; its full sequence is Probable manganese-dependent inorganic pyrophosphatase (309 aa).

Mn(2+) is bound by residues His-9, Asp-13, Asp-15, Asp-75, His-97, and Asp-149.

The protein belongs to the PPase class C family. Requires Mn(2+) as cofactor.

It is found in the cytoplasm. The enzyme catalyses diphosphate + H2O = 2 phosphate + H(+). This Bacillus velezensis (strain DSM 23117 / BGSC 10A6 / LMG 26770 / FZB42) (Bacillus amyloliquefaciens subsp. plantarum) protein is Probable manganese-dependent inorganic pyrophosphatase.